We begin with the raw amino-acid sequence, 751 residues long: MESIPNQLPAGRDSSCSPNSKDLQSYSGPPLKPNQVSETSLYGIPIVSLVIDGQERLCLAQISNTLLKNYSYNEIHNRRVALGITCVQCTPVQLEILRRAGAMPISSRRCGMITKREAERLCKSFLGAHSPPKLPENFAFDVSHECAWGSRGNFIPARYNSSRAKCIKCSFCNMYFSPNKFIFHSHRTPESKYTQPDAANFNSWRRHLKLSDKNSSDDVIHAWEDVKAMFNGGSRKRTLPIGRSESSPSQPPRGQTQGEPSDVPHKTLRCEDDRVNVTMPSSIRSYPVIPVPSKSFGMLQKIPPPLFPHPYGFPAFGLCQKKDDGEVMGEPNKTNLSGVFWPSPKDSAYTSFPMFWPTTGSLAMPTYHHAQPKPPSDVLCARHNELDVSEQSDRSTSTPKDSLLDNERCSSTQSTRNEEDKSGDESRSIEGIPPTSRKISYISAFRPVVKDVESIAKLYGNRGPYSGPRSGYMSPDFLSESSSYRSVSPDVDSVDDPDVDVESHKAHEDEECLQLSVDDRRSPHSLTLAQSEGVKGQDQENTQMHTLNDLHSTNSSETRPSDMESHGNKHTTRFEVYARERDEHVHQMSTSYFGSATTYQRETSVKDVHEEEPSSTVEEMEPKNHQDENNISEERLKEPNDVCADEEAICKDTGNRGSLIEKNIESMAKEELQKQLVEQVELRKKLEREFQNLKDSFQDQMKRELSYREEMVQQLQIVREAHDALHHFSCKMLTPRHCTGTCTFKPPLLPP.

Disordered regions lie at residues 1-30, 234-267, 386-434, 459-569, and 600-635; these read MESI…SGPP, SRKR…PHKT, LDVS…GIPP, YGNR…HGNK, and QRET…SEER. Composition is skewed to polar residues over residues 14–27 and 244–259; these read SSCS…QSYS and SESS…TQGE. Positions 416–428 are enriched in basic and acidic residues; the sequence is RNEEDKSGDESRS. The segment covering 479-491 has biased composition (low complexity); sequence SESSSYRSVSPDV. Polar residues predominate over residues 539-558; the sequence is QENTQMHTLNDLHSTNSSET. Composition is skewed to basic and acidic residues over residues 559 to 569, 603 to 612, and 620 to 635; these read RPSDMESHGNK, TSVKDVHEEE, and MEPK…SEER. Positions 666–704 form a coiled coil; sequence SMAKEELQKQLVEQVELRKKLEREFQNLKDSFQDQMKRE.

This sequence belongs to the SKI family.

It localises to the nucleus. May inhibit BMP signaling. The sequence is that of SKI family transcriptional corepressor 1 homolog-B (skor1b) from Danio rerio (Zebrafish).